Here is a 222-residue protein sequence, read N- to C-terminus: Phosphoribosylformylglycinamidine synthase subunit PurQ (222 aa).

In terms of domain architecture, Glutamine amidotransferase type-1 spans 2–222 (SVAIVRFPGT…DNLLHIAEMK (221 aa)). Residue cysteine 86 is the Nucleophile of the active site. Active-site residues include histidine 194 and glutamate 196.

Part of the FGAM synthase complex composed of 1 PurL, 1 PurQ and 2 PurS subunits.

It localises to the cytoplasm. It carries out the reaction N(2)-formyl-N(1)-(5-phospho-beta-D-ribosyl)glycinamide + L-glutamine + ATP + H2O = 2-formamido-N(1)-(5-O-phospho-beta-D-ribosyl)acetamidine + L-glutamate + ADP + phosphate + H(+). The enzyme catalyses L-glutamine + H2O = L-glutamate + NH4(+). Its pathway is purine metabolism; IMP biosynthesis via de novo pathway; 5-amino-1-(5-phospho-D-ribosyl)imidazole from N(2)-formyl-N(1)-(5-phospho-D-ribosyl)glycinamide: step 1/2. Functionally, part of the phosphoribosylformylglycinamidine synthase complex involved in the purines biosynthetic pathway. Catalyzes the ATP-dependent conversion of formylglycinamide ribonucleotide (FGAR) and glutamine to yield formylglycinamidine ribonucleotide (FGAM) and glutamate. The FGAM synthase complex is composed of three subunits. PurQ produces an ammonia molecule by converting glutamine to glutamate. PurL transfers the ammonia molecule to FGAR to form FGAM in an ATP-dependent manner. PurS interacts with PurQ and PurL and is thought to assist in the transfer of the ammonia molecule from PurQ to PurL. This Helicobacter hepaticus (strain ATCC 51449 / 3B1) protein is Phosphoribosylformylglycinamidine synthase subunit PurQ.